A 211-amino-acid chain; its full sequence is FMN-dependent NADH:quinone oxidoreductase 3 (211 aa).

Position 102–105 (102–105 (MWNF)) interacts with FMN.

The protein belongs to the azoreductase type 1 family. Homodimer. The cofactor is FMN.

It carries out the reaction 2 a quinone + NADH + H(+) = 2 a 1,4-benzosemiquinone + NAD(+). It catalyses the reaction N,N-dimethyl-1,4-phenylenediamine + anthranilate + 2 NAD(+) = 2-(4-dimethylaminophenyl)diazenylbenzoate + 2 NADH + 2 H(+). Its function is as follows. Quinone reductase that provides resistance to thiol-specific stress caused by electrophilic quinones. Also exhibits azoreductase activity. Catalyzes the reductive cleavage of the azo bond in aromatic azo compounds to the corresponding amines. This chain is FMN-dependent NADH:quinone oxidoreductase 3, found in Bacillus anthracis.